The chain runs to 451 residues: Glyceraldehyde-3-phosphate dehydrogenase B, chloroplastic (451 aa).

A chloroplast-targeting transit peptide spans 1–83; that stretch reads MASHAALAPS…AAPVRGETVA (83 aa). NADP(+)-binding positions include 94 to 95, D118, and R163; that span reads RI. D-glyceraldehyde 3-phosphate is bound by residues 237 to 239, T268, R283, 296 to 297, and R319; these read SCT and TG. The Nucleophile role is filled by C238. Position 402 (N402) interacts with NADP(+).

This sequence belongs to the glyceraldehyde-3-phosphate dehydrogenase family. As to quaternary structure, tetramer of either four A chains (GAPDH 2) or two A and two B chains (GAPDH 1).

It localises to the plastid. The protein resides in the chloroplast. It carries out the reaction D-glyceraldehyde 3-phosphate + phosphate + NADP(+) = (2R)-3-phospho-glyceroyl phosphate + NADPH + H(+). It functions in the pathway carbohydrate biosynthesis; Calvin cycle. The polypeptide is Glyceraldehyde-3-phosphate dehydrogenase B, chloroplastic (GAPB) (Spinacia oleracea (Spinach)).